The following is a 216-amino-acid chain: Imidazole glycerol phosphate synthase subunit HisH (216 aa).

Positions 5–213 (RLAVIDYDAG…VEFVARRLPA (209 aa)) constitute a Glutamine amidotransferase type-1 domain. The active-site Nucleophile is Cys-83. Residues His-188 and Glu-190 contribute to the active site.

Heterodimer of HisH and HisF.

It is found in the cytoplasm. The enzyme catalyses 5-[(5-phospho-1-deoxy-D-ribulos-1-ylimino)methylamino]-1-(5-phospho-beta-D-ribosyl)imidazole-4-carboxamide + L-glutamine = D-erythro-1-(imidazol-4-yl)glycerol 3-phosphate + 5-amino-1-(5-phospho-beta-D-ribosyl)imidazole-4-carboxamide + L-glutamate + H(+). It carries out the reaction L-glutamine + H2O = L-glutamate + NH4(+). Its pathway is amino-acid biosynthesis; L-histidine biosynthesis; L-histidine from 5-phospho-alpha-D-ribose 1-diphosphate: step 5/9. In terms of biological role, IGPS catalyzes the conversion of PRFAR and glutamine to IGP, AICAR and glutamate. The HisH subunit catalyzes the hydrolysis of glutamine to glutamate and ammonia as part of the synthesis of IGP and AICAR. The resulting ammonia molecule is channeled to the active site of HisF. This chain is Imidazole glycerol phosphate synthase subunit HisH, found in Synechococcus sp. (strain JA-3-3Ab) (Cyanobacteria bacterium Yellowstone A-Prime).